Here is a 373-residue protein sequence, read N- to C-terminus: Probable pectin lyase C (373 aa).

The signal sequence occupies residues 1 to 17 (MKKYLLSLLAAVTYTTA). Intrachain disulfides connect Cys-78–Cys-95 and Cys-87–Cys-215. Residues Asn-140 and Asn-229 are each glycosylated (N-linked (GlcNAc...) asparagine). Residue Arg-245 is part of the active site. Cys-315 and Cys-323 are disulfide-bonded.

It belongs to the polysaccharide lyase 1 family.

It is found in the secreted. The catalysed reaction is Eliminative cleavage of (1-&gt;4)-alpha-D-galacturonan methyl ester to give oligosaccharides with 4-deoxy-6-O-methyl-alpha-D-galact-4-enuronosyl groups at their non-reducing ends.. In terms of biological role, pectinolytic enzymes consist of four classes of enzymes: pectin lyase, polygalacturonase, pectin methylesterase and rhamnogalacturonase. Among pectinolytic enzymes, pectin lyase is the most important in depolymerization of pectin, since it cleaves internal glycosidic bonds of highly methylated pectins. The protein is Probable pectin lyase C (pelC) of Emericella nidulans (strain FGSC A4 / ATCC 38163 / CBS 112.46 / NRRL 194 / M139) (Aspergillus nidulans).